The primary structure comprises 1483 residues: Rho GTPase-activating protein 23 (1483 aa).

The tract at residues 15–34 (PEPRPPQLPLGPRDGCSSGR) is disordered. One can recognise a PDZ domain in the interval 71 to 155 (HCILKEEENG…TLELSIMPKD (85 aa)). 2 disordered regions span residues 212–276 (ISAL…PGSR) and 300–345 (AGER…GQEG). Basic and acidic residues predominate over residues 316–325 (SQDRLEDVTT). Over residues 331–342 (CSTSQDALSQLG) the composition is skewed to polar residues. 2 positions are modified to phosphoserine: Ser-361 and Ser-372. The segment at 385 to 407 (PSARTSACPSRDLTQAPPPSGLQ) is disordered. A Phosphoserine modification is found at Ser-421. 2 disordered regions span residues 448-485 (SLAQ…DHRD) and 508-527 (NLGF…RLGR). 4 positions are modified to phosphoserine: Ser-515, Ser-579, Ser-607, and Ser-619. Phosphothreonine is present on Thr-652. Phosphoserine is present on residues Ser-655, Ser-658, and Ser-673. A PH domain is found at 684-804 (DIRREGWLYY…WIRAIRENSR (121 aa)). Positions 827–848 (KVSHSSGPKADSSPKGSRGLGG) are disordered. Lys-850 participates in a covalent cross-link: Glycyl lysine isopeptide (Lys-Gly) (interchain with G-Cter in SUMO2). Disordered regions lie at residues 860–879 (RGLR…VAAP), 1093–1150 (FSDD…SWVP), 1171–1361 (KRKK…GSRP), and 1419–1469 (ELGG…LQGL). One can recognise a Rho-GAP domain in the interval 901–1093 (IRLEECQPAT…TLIQHSDWFF (193 aa)). A compositionally biased stretch (basic and acidic residues) spans 1099-1110 (KGERTPVDDKEP). Composition is skewed to polar residues over residues 1133 to 1144 (GSDSTTCSSAKS) and 1236 to 1248 (SIVS…STMD). Over residues 1338 to 1351 (GSASSSSQESLRPP) the composition is skewed to low complexity. The span at 1440 to 1457 (SGLSSLESTKARASSAAS) shows a compositional bias: polar residues.

In terms of biological role, GTPase activator for the Rho-type GTPases by converting them to an inactive GDP-bound state. This is Rho GTPase-activating protein 23 (Arhgap23) from Mus musculus (Mouse).